The primary structure comprises 313 residues: Probable cell division protein WhiA (313 aa).

The H-T-H motif DNA-binding region spans 278–311 (SLKELGKLLDPPLSKSGVNHRLRRIKSIANEIRG).

The protein belongs to the WhiA family.

Involved in cell division and chromosome segregation. The chain is Probable cell division protein WhiA from Halothermothrix orenii (strain H 168 / OCM 544 / DSM 9562).